Here is a 971-residue protein sequence, read N- to C-terminus: MTSTSARPARRSRAPLAITAAIIAALVIAFFIFAGFYADVLWYDQLGYLGVLLTQWGAGIALFFIGFLAMAIPVFVSIQVAYRSRPVYAKLNSQLDRYQQVIEPLRRLAMFAIPAVFGLFAGVSASSGWQRTLLWLNRTPSGTTDPQFGLDTSFYLFELPFYHAVVGFASAVVIISMLGVLATSYLYGAVRFTGREVRISKSSRIQIAITAGVYFLLQGVSIWLDQYSSVVNTANGGLFTGAAFSDVNAVIPGRTILAGIAVVVAVMFIITAAIGRWRLPIIGTAGLIVASILIGTAYPAIVQRFQVEPNERSLESPFYERNIEATRAAYGLADIEEIPYDATTDTTPGALREDAATTANIRILDPAVVGDAFSQLQQFRQYYQFGDNLDVDRYQIDGRVQDTVVAVRELSPTNTGTSWVNQHLVYTHGYSLVAAYGTQRTSDGQPVFLESGIPASGDLGDFEPRVYFGEDSPDYSIVGGPESGDKVELDYPSGVDGADETYTTFQGDGGPKVDNVFKRLIYALKFQSEQIFLANQINDQSQILYDRDPAERVGKVAPYLTVDKDPYPSVVDGRVVWIVDGYTTSDQYPYSQQTQPLVPTDRINYIRNSVKATVDAYDGKVTLYAWDTDDPILKTWQKVFPSTLKPIADISGELMSHLRFPADMFKVQRAVLGKYHVTDPGSIYSNQDLWTTPNDPTATTEAGTPASLQPPYYLTMQMPGQDSPRFSLYSTFIPPATQDTSRSVLTGYLGVDSDAGSTAGEKAADYGKLRLLTLPNDDTIPAPTQIQNNFNSDTNVANQLNLLERGGRTSVVRGNLLTLPVGGGLLYVQPVYVRSTGDTSYPLLRKVLVAFGDKIAFEDTLDAALDSIFEGDSGATAGDEDVVPTTPADGAAGDGSTDGATDGGTGSTPTPAPTASPAAPAQDVQAALDAANTALQERQAAYASGDLVAAAQADQRFTEAVQRAYELSQQQ.

A run of 7 helical transmembrane segments spans residues 16–36 (LAITAAIIAALVIAFFIFAGF), 56–76 (WGAGIALFFIGFLAMAIPVFV), 108–128 (LAMFAIPAVFGLFAGVSASSG), 161–181 (FYHAVVGFASAVVIISMLGVL), 205–225 (IQIAITAGVYFLLQGVSIWLD), 255–275 (TILAGIAVVVAVMFIITAAIG), and 281–301 (IIGTAGLIVASILIGTAYPAI). The segment covering 687 to 702 (QDLWTTPNDPTATTEA) has biased composition (polar residues). Disordered stretches follow at residues 687–706 (QDLWTTPNDPTATTEAGTPA) and 874–924 (GATA…AQDV). Composition is skewed to low complexity over residues 884 to 900 (PTTPADGAAGDGSTDGA) and 907 to 921 (STPTPAPTASPAAPA).

It belongs to the UPF0182 family.

It localises to the cell membrane. The polypeptide is UPF0182 protein CMS1887 (Clavibacter sepedonicus (Clavibacter michiganensis subsp. sepedonicus)).